We begin with the raw amino-acid sequence, 264 residues long: Acyl-[acyl-carrier-protein]--UDP-N-acetylglucosamine O-acyltransferase (264 aa).

Belongs to the transferase hexapeptide repeat family. LpxA subfamily. In terms of assembly, homotrimer.

It is found in the cytoplasm. It carries out the reaction a (3R)-hydroxyacyl-[ACP] + UDP-N-acetyl-alpha-D-glucosamine = a UDP-3-O-[(3R)-3-hydroxyacyl]-N-acetyl-alpha-D-glucosamine + holo-[ACP]. It functions in the pathway glycolipid biosynthesis; lipid IV(A) biosynthesis; lipid IV(A) from (3R)-3-hydroxytetradecanoyl-[acyl-carrier-protein] and UDP-N-acetyl-alpha-D-glucosamine: step 1/6. Functionally, involved in the biosynthesis of lipid A, a phosphorylated glycolipid that anchors the lipopolysaccharide to the outer membrane of the cell. This Rickettsia peacockii (strain Rustic) protein is Acyl-[acyl-carrier-protein]--UDP-N-acetylglucosamine O-acyltransferase.